The sequence spans 391 residues: S-adenosylmethionine synthase (391 aa).

H19 contacts ATP. Position 21 (D21) interacts with Mg(2+). E47 is a binding site for K(+). L-methionine-binding residues include E60 and Q103. Residues 103–113 (QSADIAQGVDR) are flexible loop. ATP is bound by residues 168–170 (DGK), 236–237 (RF), D245, 251–252 (RK), A268, and K272. D245 is a binding site for L-methionine. K276 serves as a coordination point for L-methionine.

This sequence belongs to the AdoMet synthase family. As to quaternary structure, homotetramer; dimer of dimers. Requires Mg(2+) as cofactor. K(+) serves as cofactor.

It localises to the cytoplasm. The catalysed reaction is L-methionine + ATP + H2O = S-adenosyl-L-methionine + phosphate + diphosphate. The protein operates within amino-acid biosynthesis; S-adenosyl-L-methionine biosynthesis; S-adenosyl-L-methionine from L-methionine: step 1/1. Catalyzes the formation of S-adenosylmethionine (AdoMet) from methionine and ATP. The overall synthetic reaction is composed of two sequential steps, AdoMet formation and the subsequent tripolyphosphate hydrolysis which occurs prior to release of AdoMet from the enzyme. The polypeptide is S-adenosylmethionine synthase (Nitratidesulfovibrio vulgaris (strain ATCC 29579 / DSM 644 / CCUG 34227 / NCIMB 8303 / VKM B-1760 / Hildenborough) (Desulfovibrio vulgaris)).